A 260-amino-acid polypeptide reads, in one-letter code: tRNA pseudouridine synthase A (260 aa).

The active-site Nucleophile is the D52. Residue Y110 participates in substrate binding.

It belongs to the tRNA pseudouridine synthase TruA family. Homodimer.

The catalysed reaction is uridine(38/39/40) in tRNA = pseudouridine(38/39/40) in tRNA. Formation of pseudouridine at positions 38, 39 and 40 in the anticodon stem and loop of transfer RNAs. The polypeptide is tRNA pseudouridine synthase A (Thiobacillus denitrificans (strain ATCC 25259 / T1)).